The sequence spans 415 residues: ATP-dependent Clp protease ATP-binding subunit ClpX (415 aa).

The region spanning M1–P54 is the ClpX-type ZB domain. Positions 12, 15, 35, and 38 each coordinate Zn(2+). P117–L124 serves as a coordination point for ATP.

It belongs to the ClpX chaperone family. In terms of assembly, component of the ClpX-ClpP complex. Forms a hexameric ring that, in the presence of ATP, binds to fourteen ClpP subunits assembled into a disk-like structure with a central cavity, resembling the structure of eukaryotic proteasomes.

Its function is as follows. ATP-dependent specificity component of the Clp protease. It directs the protease to specific substrates. Can perform chaperone functions in the absence of ClpP. The protein is ATP-dependent Clp protease ATP-binding subunit ClpX of Treponema denticola (strain ATCC 35405 / DSM 14222 / CIP 103919 / JCM 8153 / KCTC 15104).